A 510-amino-acid chain; its full sequence is Beta-glucosidase 34 (510 aa).

An N-terminal signal peptide occupies residues 1 to 26 (MGNGGRCMVEVVILLVLMAMSQGCDA). Asn-28 carries N-linked (GlcNAc...) asparagine glycosylation. Gln-52 provides a ligand contact to a beta-D-glucoside. N-linked (GlcNAc...) asparagine glycosylation occurs at Asn-120. A beta-D-glucoside-binding positions include His-153 and 198 to 199 (NE). Glu-199 (proton donor) is an active-site residue. Cysteines 218 and 226 form a disulfide. Residues Asn-279 and Asn-331 are each glycosylated (N-linked (GlcNAc...) asparagine). Tyr-342 contacts a beta-D-glucoside. Asn-360 carries an N-linked (GlcNAc...) asparagine glycan. A beta-D-glucoside is bound by residues Glu-415, Trp-465, 472 to 473 (EW), and Phe-481. Residue Glu-415 is the Nucleophile of the active site.

Belongs to the glycosyl hydrolase 1 family.

It carries out the reaction Hydrolysis of terminal, non-reducing beta-D-glucosyl residues with release of beta-D-glucose.. In Oryza sativa subsp. japonica (Rice), this protein is Beta-glucosidase 34 (BGLU34).